Consider the following 96-residue polypeptide: Translation initiation factor 1A 1 (96 aa).

The 75-residue stretch at 8-82 (GSHDLRMPDD…EKGDITWRYE (75 aa)) folds into the S1-like domain.

The protein belongs to the eIF-1A family.

Its function is as follows. Seems to be required for maximal rate of protein biosynthesis. Enhances ribosome dissociation into subunits and stabilizes the binding of the initiator Met-tRNA(I) to 40 S ribosomal subunits. The protein is Translation initiation factor 1A 1 of Haloquadratum walsbyi (strain DSM 16790 / HBSQ001).